We begin with the raw amino-acid sequence, 760 residues long: 5-methyltetrahydropteroyltriglutamate--homocysteine methyltransferase (760 aa).

Residues 17-20 (RELK) and Lys-118 contribute to the 5-methyltetrahydropteroyltri-L-glutamate site. L-homocysteine-binding positions include 434-436 (IGS) and Glu-487. L-methionine-binding positions include 434 to 436 (IGS) and Glu-487. Residues 518-519 (RC) and Trp-564 contribute to the 5-methyltetrahydropteroyltri-L-glutamate site. Asp-602 contributes to the L-homocysteine binding site. Asp-602 is an L-methionine binding site. Glu-608 lines the 5-methyltetrahydropteroyltri-L-glutamate pocket. Residues His-644, Cys-646, and Glu-668 each coordinate Zn(2+). His-697 acts as the Proton donor in catalysis. Cys-729 contacts Zn(2+).

Belongs to the vitamin-B12 independent methionine synthase family. Requires Zn(2+) as cofactor.

It catalyses the reaction 5-methyltetrahydropteroyltri-L-glutamate + L-homocysteine = tetrahydropteroyltri-L-glutamate + L-methionine. It participates in amino-acid biosynthesis; L-methionine biosynthesis via de novo pathway; L-methionine from L-homocysteine (MetE route): step 1/1. Functionally, catalyzes the transfer of a methyl group from 5-methyltetrahydrofolate to homocysteine resulting in methionine formation. This is 5-methyltetrahydropteroyltriglutamate--homocysteine methyltransferase from Buchnera aphidicola subsp. Cinara cedri (strain Cc).